The sequence spans 114 residues: Phycoerythrin alpha-1 subunit (114 aa).

(2R,3E)-phycoerythrobilin is bound by residues aspartate 52, serine 53, glutamate 63, arginine 64, cysteine 67, threonine 72, lysine 74, alanine 75, and lysine 84.

It belongs to the phycoerythrin family. As to quaternary structure, heterotetramer of 2 different alpha chains and 2 identical beta chains which form 2 alpha-beta heterodimers within the heterotetramer. The two alpha-beta heterodimers are rotated to an open configuration in contrast to the closed configuration found in other cryptophyte species due to the insertion of a single amino acid, Asp-65, in a conserved region of the alpha chain. In the open form, the central chromophores are not in physical contact but are separated by a water-filled channel. Post-translationally, contains three phycoerythrobilin chromophores with binding mediated by both the alpha and beta subunits.

The protein localises to the plastid. It localises to the chloroplast thylakoid membrane. Light-harvesting photosynthetic tetrapyrrole chromophore-protein from the phycobiliprotein complex. This chain is Phycoerythrin alpha-1 subunit, found in Hemiselmis andersenii (Cryptophyte alga).